A 449-amino-acid chain; its full sequence is XK-related protein 2 (449 aa).

Helical transmembrane passes span 35–55, 68–88, 98–118, 174–194, 204–224, 241–261, 269–289, 306–326, 357–377, and 382–402; these read FSIL…LYMV, TYTF…LIFV, LSLF…EAMI, IQAF…SLIS, LMAF…MLAI, LCIT…LVLF, AVPF…VKFW, VGTL…NFSC, LVEN…VLLN, and LIAV…LLFF.

The protein belongs to the XK family.

The protein localises to the membrane. The sequence is that of XK-related protein 2 (Xkrx) from Mus musculus (Mouse).